Here is a 973-residue protein sequence, read N- to C-terminus: Isoleucine--tRNA ligase, mitochondrial (973 aa).

The short motif at 87–97 (PFANGRLHIGH) is the 'HIGH' region element. The 'KMSKS' region signature appears at 625-629 (KQSKS). Lys-628 is a binding site for ATP.

Belongs to the class-I aminoacyl-tRNA synthetase family.

Its subcellular location is the cytoplasm. The protein localises to the mitochondrion matrix. It catalyses the reaction tRNA(Ile) + L-isoleucine + ATP = L-isoleucyl-tRNA(Ile) + AMP + diphosphate. In Schizosaccharomyces pombe (strain 972 / ATCC 24843) (Fission yeast), this protein is Isoleucine--tRNA ligase, mitochondrial (ism1).